We begin with the raw amino-acid sequence, 635 residues long: 1-deoxy-D-xylulose-5-phosphate synthase (635 aa).

Thiamine diphosphate contacts are provided by residues His-79 and 120-122; that span reads GHS. Residue Asp-151 participates in Mg(2+) binding. Thiamine diphosphate-binding positions include 152 to 153, Asn-182, Tyr-291, and Glu-372; that span reads GA. Residue Asn-182 participates in Mg(2+) binding.

It belongs to the transketolase family. DXPS subfamily. Homodimer. It depends on Mg(2+) as a cofactor. The cofactor is thiamine diphosphate.

The enzyme catalyses D-glyceraldehyde 3-phosphate + pyruvate + H(+) = 1-deoxy-D-xylulose 5-phosphate + CO2. It participates in metabolic intermediate biosynthesis; 1-deoxy-D-xylulose 5-phosphate biosynthesis; 1-deoxy-D-xylulose 5-phosphate from D-glyceraldehyde 3-phosphate and pyruvate: step 1/1. Catalyzes the acyloin condensation reaction between C atoms 2 and 3 of pyruvate and glyceraldehyde 3-phosphate to yield 1-deoxy-D-xylulose-5-phosphate (DXP). In Xylella fastidiosa (strain M23), this protein is 1-deoxy-D-xylulose-5-phosphate synthase.